Consider the following 351-residue polypeptide: Minor outer capsid protein P9 (351 aa).

The tract at residues 246 to 330 (GVPAALPQPD…EMDMPDGFHD (85 aa)) is disordered. Over residues 285-298 (MIRKKVETSKDAPS) the composition is skewed to basic and acidic residues. Residues 315–324 (LEDDMSEMDM) are compositionally biased toward acidic residues.

Belongs to the phytoreovirus minor outer capsid protein P9 family.

It localises to the virion. It is found in the host cytoplasm. In terms of biological role, minor outer capsid protein. The protein is Minor outer capsid protein P9 of Alopecurus aequalis (Barnyard grass).